Reading from the N-terminus, the 138-residue chain is Cyclin-dependent kinase 4 inhibitor B (138 aa).

The ANK 1; truncated repeat unit spans residues 13 to 39 (GSDEGLASAAARGLVEKVRQLLEAGAD). ANK repeat units lie at residues 46–74 (FGRR…EPNC), 79–108 (TLTR…RLDV), and 112–138 (WGRL…ATGD).

Belongs to the CDKN2 cyclin-dependent kinase inhibitor family. In terms of assembly, heterodimer of CDKN2B with CDK4 or CDK6. Isoform 2 does not interact with CDK4 nor CDK6. As to expression, isoform 2 is expressed in normal (keratinocytes, fibroblasts) and tumor cell lines.

The protein resides in the cytoplasm. Functionally, interacts strongly with CDK4 and CDK6. Potent inhibitor. Potential effector of TGF-beta induced cell cycle arrest. In Homo sapiens (Human), this protein is Cyclin-dependent kinase 4 inhibitor B (CDKN2B).